We begin with the raw amino-acid sequence, 68 residues long: Conotoxin Mr3.3 (68 aa).

Positions 1-19 are cleaved as a signal peptide; sequence MSRLGVLLTICLLLFPLTA. The propeptide occupies 20-51; sequence VPLDGDQPADRPAERLQDDISSEHHPHFDSGR. Residues 22-46 form a disordered region; that stretch reads LDGDQPADRPAERLQDDISSEHHPH. Over residues 27–46 the composition is skewed to basic and acidic residues; the sequence is PADRPAERLQDDISSEHHPH. 3 disulfides stabilise this stretch: C53-C67, C54-C63, and C59-C66. P65 is subject to 4-hydroxyproline.

It belongs to the conotoxin M superfamily. As to expression, expressed by the venom duct.

It localises to the secreted. This is Conotoxin Mr3.3 from Conus marmoreus (Marble cone).